A 111-amino-acid chain; its full sequence is Dynein light chain Tctex-type (111 aa).

It belongs to the dynein light chain Tctex-type family. The cytoplasmic dynein complex consists of two catalytic heavy chains (HCs) and a number of non-catalytic subunits presented by intermediate chains (ICs), light intermediate chains (LICs) and light chains (LCs).

The protein localises to the cytoplasm. Its subcellular location is the cytoskeleton. Functionally, acts as one of several non-catalytic accessory components of the cytoplasmic dynein complex that are thought to be involved in linking dynein to cargos and to adapter proteins that regulate dynein function. Cytoplasmic dynein acts as a motor for the intracellular retrograde motility of vesicles and organelles along microtubules. Required for spermatid differentiation. Is not required for polarized transport in rhabdomere development and appears to be a non-essential component of the cytoplasmic dynein complex. This is Dynein light chain Tctex-type (Dlc90F) from Drosophila melanogaster (Fruit fly).